The chain runs to 538 residues: Hydroxylamine reductase (538 aa).

Residues cysteine 3, cysteine 6, cysteine 15, and cysteine 21 each coordinate [4Fe-4S] cluster. Positions 239, 263, 307, 394, 422, 447, 481, and 483 each coordinate hybrid [4Fe-2O-2S] cluster. Cysteine 394 is modified (cysteine persulfide).

Belongs to the HCP family. [4Fe-4S] cluster serves as cofactor. Requires hybrid [4Fe-2O-2S] cluster as cofactor.

The protein resides in the cytoplasm. It carries out the reaction A + NH4(+) + H2O = hydroxylamine + AH2 + H(+). In terms of biological role, catalyzes the reduction of hydroxylamine to form NH(3) and H(2)O. This Solidesulfovibrio magneticus (strain ATCC 700980 / DSM 13731 / RS-1) (Desulfovibrio magneticus) protein is Hydroxylamine reductase.